A 240-amino-acid polypeptide reads, in one-letter code: Ribosomal RNA large subunit methyltransferase E (240 aa).

Residues 1–20 are compositionally biased toward gly residues; the sequence is MSKAGGNKGGVKTGGRGGAG. The interval 1–27 is disordered; that stretch reads MSKAGGNKGGVKTGGRGGAGSSNLQVR. Residues Gly92, Trp94, Asp115, Asp131, and Asp155 each coordinate S-adenosyl-L-methionine. The active-site Proton acceptor is the Lys195.

Belongs to the class I-like SAM-binding methyltransferase superfamily. RNA methyltransferase RlmE family.

It localises to the cytoplasm. The enzyme catalyses uridine(2552) in 23S rRNA + S-adenosyl-L-methionine = 2'-O-methyluridine(2552) in 23S rRNA + S-adenosyl-L-homocysteine + H(+). Its function is as follows. Specifically methylates the uridine in position 2552 of 23S rRNA at the 2'-O position of the ribose in the fully assembled 50S ribosomal subunit. This Brucella anthropi (strain ATCC 49188 / DSM 6882 / CCUG 24695 / JCM 21032 / LMG 3331 / NBRC 15819 / NCTC 12168 / Alc 37) (Ochrobactrum anthropi) protein is Ribosomal RNA large subunit methyltransferase E.